A 246-amino-acid polypeptide reads, in one-letter code: MTLDLDAQKKDEKLLLATIQQEYKILAEYKMIESEKLSGIYVIPSYANSLQWFGVFFGRHGFYEKSVFRFSILLSDGFPDDKSVPAIVFQHNVVHPLVCPYTYSLDLSHAFHEWRPAEDHLWQVLKYMQAIFADPLESIRNVSTVHERSNAEIIKLLNNNRDAYAALVQESILESKAHIYDNPHTEDPHYIIFEKFQDDIHGPVLEQIRQNRATVGSTESGGGGGAATGLSWVKFKEGEFKPLSIE.

The UBC core domain occupies 20-177 (QQEYKILAEY…VQESILESKA (158 aa)).

It belongs to the ubiquitin-conjugating enzyme family. FTS subfamily.

The protein is Protein crossbronx (cbx) of Drosophila grimshawi (Hawaiian fruit fly).